Here is a 91-residue protein sequence, read N- to C-terminus: DNA-directed RNA polymerase subunit Rpo5 (91 aa).

It belongs to the archaeal Rpo5/eukaryotic RPB5 RNA polymerase subunit family. Part of the RNA polymerase complex.

It localises to the cytoplasm. It carries out the reaction RNA(n) + a ribonucleoside 5'-triphosphate = RNA(n+1) + diphosphate. DNA-dependent RNA polymerase (RNAP) catalyzes the transcription of DNA into RNA using the four ribonucleoside triphosphates as substrates. The sequence is that of DNA-directed RNA polymerase subunit Rpo5 from Staphylothermus marinus (strain ATCC 43588 / DSM 3639 / JCM 9404 / F1).